Reading from the N-terminus, the 477-residue chain is Erythritol/L-threitol-binding protein (477 aa).

Residues 1–38 (MMSRESQPGLHRQLSRRNMLAAMGLAGAAAVSLPVLSA) constitute a signal peptide (tat-type signal).

This sequence belongs to the bacterial solute-binding protein 1 family. Predicted to be exported by the Tat system. The position of the signal peptide cleavage has not been experimentally proven.

In terms of biological role, part of an ABC transporter complex involved in erythritol/L-threitol import. Binds erythritol and L-threitol. Functions in the transport for the degradation pathways of erythritol and L-threitol, that allow M.smegmatis to grow on these compounds as the sole carbon source. The sequence is that of Erythritol/L-threitol-binding protein from Mycolicibacterium smegmatis (strain ATCC 700084 / mc(2)155) (Mycobacterium smegmatis).